A 393-amino-acid polypeptide reads, in one-letter code: tRNA(Met) cytidine acetate ligase (393 aa).

ATP is bound by residues G81, N142, and R167.

The protein belongs to the TmcAL family.

It localises to the cytoplasm. It carries out the reaction cytidine(34) in elongator tRNA(Met) + acetate + ATP = N(4)-acetylcytidine(34) in elongator tRNA(Met) + AMP + diphosphate. In terms of biological role, catalyzes the formation of N(4)-acetylcytidine (ac(4)C) at the wobble position of elongator tRNA(Met), using acetate and ATP as substrates. First activates an acetate ion to form acetyladenylate (Ac-AMP) and then transfers the acetyl group to tRNA to form ac(4)C34. This is tRNA(Met) cytidine acetate ligase from Bacillus cereus (strain Q1).